The following is a 546-amino-acid chain: Chaperonin GroEL (546 aa).

ATP-binding positions include 29–32, lysine 50, 86–90, glycine 414, and aspartate 494; these read TLGP and DGTTT. Residues 525-546 form a disordered region; the sequence is KKESAAPAMPGHDGMGGMGGMM. Residues 537-546 are compositionally biased toward gly residues; it reads DGMGGMGGMM.

Belongs to the chaperonin (HSP60) family. As to quaternary structure, forms a cylinder of 14 subunits composed of two heptameric rings stacked back-to-back. Interacts with the co-chaperonin GroES.

The protein localises to the cytoplasm. The catalysed reaction is ATP + H2O + a folded polypeptide = ADP + phosphate + an unfolded polypeptide.. Together with its co-chaperonin GroES, plays an essential role in assisting protein folding. The GroEL-GroES system forms a nano-cage that allows encapsulation of the non-native substrate proteins and provides a physical environment optimized to promote and accelerate protein folding. In Bdellovibrio bacteriovorus (strain ATCC 15356 / DSM 50701 / NCIMB 9529 / HD100), this protein is Chaperonin GroEL.